A 203-amino-acid chain; its full sequence is Small ribosomal subunit protein uS7 (203 aa).

A disordered region spans residues 1–22; the sequence is MSESEAPEPDQPAGAEEATGAK.

This sequence belongs to the universal ribosomal protein uS7 family. Part of the 30S ribosomal subunit.

Its function is as follows. One of the primary rRNA binding proteins, it binds directly to 16S rRNA where it nucleates assembly of the head domain of the 30S subunit. Is located at the subunit interface close to the decoding center. The polypeptide is Small ribosomal subunit protein uS7 (Halococcus morrhuae (Micrococcus morrhuae)).